The primary structure comprises 374 residues: Ribosomal RNA large subunit methyltransferase G (374 aa).

It belongs to the methyltransferase superfamily. RlmG family.

It is found in the cytoplasm. The catalysed reaction is guanosine(1835) in 23S rRNA + S-adenosyl-L-methionine = N(2)-methylguanosine(1835) in 23S rRNA + S-adenosyl-L-homocysteine + H(+). Specifically methylates the guanine in position 1835 (m2G1835) of 23S rRNA. This Photobacterium profundum (strain SS9) protein is Ribosomal RNA large subunit methyltransferase G.